The chain runs to 839 residues: Autophagy-related protein 9A (839 aa).

Residues 1 to 21 are disordered; that stretch reads MAQFDTEYQRLEASYSDSPPG. Residue Ala2 is modified to N-acetylalanine. The Cytoplasmic portion of the chain corresponds to 2–61; sequence AQFDTEYQRLEASYSDSPPGEEDLLVHVPEGSKSPWHHIENLDLFFSRVYNLHQKNGFTC. The short motif at 8 to 11 is the Tyrosine-based sorting signal element; it reads YQRL. 3 positions are modified to phosphoserine: Ser14, Ser16, and Ser18. A helical transmembrane segment spans residues 62–84; sequence MLIGEIFELMQFLFVVAFTTFLV. At 85 to 128 the chain is on the lumenal side; it reads SCVDYDILFANKMVNHSLHPTEPVKVTLPDAFLPAQVCSARIQE. N-linked (GlcNAc...) asparagine glycosylation is present at Asn99. The helical transmembrane segment at 129–154 threads the bilayer; the sequence is NGSLITILVIAGVFWVHRLIKFIYNI. The Cytoplasmic segment spans residues 155-290; sequence CCYWEIHSFY…ELAQRLSNRI (136 aa). An intramembrane segment occupies 291–301; it reads LWIGIANFLLC. Over 302–319 the chain is Cytoplasmic; the sequence is PLILIWQILYAFFSYAEV. Residues 320 to 328 lie within the membrane without spanning it; the sequence is LKREPGALG. Residues 329–371 lie on the Cytoplasmic side of the membrane; sequence ARCWSLYGRCYLRHFNELEHELQSRLNRGYKPASKYMNCFLSP. Residues 372 to 397 form a helical membrane-spanning segment; it reads LLTLLAKNCAFFAGSILAVLIALTIY. Topologically, residues 398–406 are lumenal; sequence DEDVLAVEH. Residues 407-424 traverse the membrane as a helical segment; that stretch reads VLTTVTLLGVTVTVCRSF. At 425–470 the chain is on the cytoplasmic side; the sequence is IPDQHMVFCPEQLLRVILAHIHYMPDHWQGNAHRSQTRDEFAQLFQ. An intramembrane segment occupies 471–480; it reads YKAVFILEEL. The Cytoplasmic portion of the chain corresponds to 481-483; the sequence is LSP. The stretch at 484–492 is an intramembrane region; it reads IVTPLILIF. Topologically, residues 493–839 are cytoplasmic; sequence CLRPRALEII…DELPPQVHKV (347 aa). Phosphoserine is present on residues Ser656, Ser735, Ser738, Ser741, and Ser828. Disordered regions lie at residues 656-688 and 719-839; these read SPLQPGQAPTGRAPSTMTGSGVDARTASSGSSV and QQAQ…VHKV. Residues 724 to 736 show a composition bias toward basic and acidic residues; sequence EPERHVWHRRESD. Acidic residues-rich tracts occupy residues 737 to 747 and 823 to 832; these read ESGESAPEEGG and VPEEGSEDEL.

It belongs to the ATG9 family. Homotrimer; forms a homotrimer with a central pore that forms a path between the two membrane leaflets. Interacts (via cytoplasmic its C-terminus) with ATG2A. Interacts with SUPT20H. Interacts (via the tyrosine-based sorting signal motif) with AP4M1; promoting association with the AP-4 complex. Interacts with ARFIP1 and ARFIP2. Interacts with PI4K2A and PI4KB. Interacts with ATG4A; the interaction is direct and promotes ATG9A trafficking. Post-translationally, ufmylated in a DDRGK1 dependent manner.

Its subcellular location is the preautophagosomal structure membrane. The protein localises to the cytoplasmic vesicle. It localises to the autophagosome membrane. The protein resides in the golgi apparatus. It is found in the trans-Golgi network membrane. Its subcellular location is the late endosome membrane. The protein localises to the recycling endosome membrane. It localises to the endoplasmic reticulum membrane. The protein resides in the mitochondrion membrane. It carries out the reaction a 1,2-diacyl-sn-glycero-3-phosphocholine(in) = a 1,2-diacyl-sn-glycero-3-phosphocholine(out). The enzyme catalyses a 1,2-diacyl-sn-glycero-3-phospho-L-serine(in) = a 1,2-diacyl-sn-glycero-3-phospho-L-serine(out). The catalysed reaction is a 1,2-diacyl-sn-glycero-3-phosphoethanolamine(in) = a 1,2-diacyl-sn-glycero-3-phosphoethanolamine(out). Functionally, phospholipid scramblase involved in autophagy by mediating autophagosomal membrane expansion. Cycles between the preautophagosomal structure/phagophore assembly site (PAS) and the cytoplasmic vesicle pool and supplies membrane for the growing autophagosome. Lipid scramblase activity plays a key role in preautophagosomal structure/phagophore assembly by distributing the phospholipids that arrive through ATG2 (ATG2A or ATG2B) from the cytoplasmic to the luminal leaflet of the bilayer, thereby driving autophagosomal membrane expansion. Also required to supply phosphatidylinositol 4-phosphate to the autophagosome initiation site by recruiting the phosphatidylinositol 4-kinase beta (PI4KB) in a process dependent on ARFIP2, but not ARFIP1. In addition to autophagy, also plays a role in necrotic cell death. The protein is Autophagy-related protein 9A of Bos taurus (Bovine).